A 283-amino-acid polypeptide reads, in one-letter code: MGQKIHPTGFRLSVTRNWASRWYAGNSNFATMLNEDLKVRAYLKTKLKNASVGRVIIERPAKNARITIYSSRPGVVIGKKGEDIEVLKSALTKMMGVPVHVNIEEIRKPETDAQLIADSIAQQLEKRIMFRRAMKRAMQNAMRLGAQGIKIMSSGRLNGIEIARKEWYREGRVPLHTLRAEIDYGFGEAETTYGIIGIKVWVYKGDRLPSGEPPVDLTKEDDTKRRGPRRDDGKPSSRPRTARPEGQPGAAAAPGAAPAAKRVRAKKPDAAVDGAVPAEKAGE.

Residues 39-107 (VRAYLKTKLK…PVHVNIEEIR (69 aa)) form the KH type-2 domain. Positions 209–283 (PSGEPPVDLT…GAVPAEKAGE (75 aa)) are disordered. Basic and acidic residues predominate over residues 217 to 235 (LTKEDDTKRRGPRRDDGKP). Residues 244–260 (PEGQPGAAAAPGAAPAA) are compositionally biased toward low complexity.

This sequence belongs to the universal ribosomal protein uS3 family. As to quaternary structure, part of the 30S ribosomal subunit. Forms a tight complex with proteins S10 and S14.

Its function is as follows. Binds the lower part of the 30S subunit head. Binds mRNA in the 70S ribosome, positioning it for translation. This Herminiimonas arsenicoxydans protein is Small ribosomal subunit protein uS3.